Reading from the N-terminus, the 524-residue chain is Bifunctional purine biosynthesis protein PurH (524 aa).

Positions 1-145 (MIQQALLSVS…KNHRDVTVIV (145 aa)) constitute an MGS-like domain.

This sequence belongs to the PurH family.

It carries out the reaction (6R)-10-formyltetrahydrofolate + 5-amino-1-(5-phospho-beta-D-ribosyl)imidazole-4-carboxamide = 5-formamido-1-(5-phospho-D-ribosyl)imidazole-4-carboxamide + (6S)-5,6,7,8-tetrahydrofolate. The enzyme catalyses IMP + H2O = 5-formamido-1-(5-phospho-D-ribosyl)imidazole-4-carboxamide. The protein operates within purine metabolism; IMP biosynthesis via de novo pathway; 5-formamido-1-(5-phospho-D-ribosyl)imidazole-4-carboxamide from 5-amino-1-(5-phospho-D-ribosyl)imidazole-4-carboxamide (10-formyl THF route): step 1/1. It participates in purine metabolism; IMP biosynthesis via de novo pathway; IMP from 5-formamido-1-(5-phospho-D-ribosyl)imidazole-4-carboxamide: step 1/1. The protein is Bifunctional purine biosynthesis protein PurH of Ralstonia nicotianae (strain ATCC BAA-1114 / GMI1000) (Ralstonia solanacearum).